A 198-amino-acid polypeptide reads, in one-letter code: Glycerol-3-phosphate acyltransferase (198 aa).

5 helical membrane passes run 6–26 (FLPV…GLVL), 56–78 (LAAG…AGYI), 83–101 (AAMA…PVWL), 113–133 (IGIL…LWLA), and 155–175 (FLWW…TLLL).

This sequence belongs to the PlsY family. Probably interacts with PlsX.

The protein resides in the cell inner membrane. It carries out the reaction an acyl phosphate + sn-glycerol 3-phosphate = a 1-acyl-sn-glycero-3-phosphate + phosphate. Its pathway is lipid metabolism; phospholipid metabolism. Functionally, catalyzes the transfer of an acyl group from acyl-phosphate (acyl-PO(4)) to glycerol-3-phosphate (G3P) to form lysophosphatidic acid (LPA). This enzyme utilizes acyl-phosphate as fatty acyl donor, but not acyl-CoA or acyl-ACP. This Bradyrhizobium diazoefficiens (strain JCM 10833 / BCRC 13528 / IAM 13628 / NBRC 14792 / USDA 110) protein is Glycerol-3-phosphate acyltransferase.